Reading from the N-terminus, the 150-residue chain is MEDMDTTITLIGTRLAKEGVEFFFDGDTPECEQCKLKNTCMSLEKGKKYRVVKVRNNTLHECFVHDKGAMVVDVVKAPIFALLDSKKAIEGSKIRYQAPKCDEKLDAETYELCYPKGLRNGERCTVLKVMGTVEMEADPSITLKKVELLP.

It belongs to the UPF0179 family.

This chain is UPF0179 protein Mbur_1033, found in Methanococcoides burtonii (strain DSM 6242 / NBRC 107633 / OCM 468 / ACE-M).